Here is a 438-residue protein sequence, read N- to C-terminus: Death-associated inhibitor of apoptosis 1 (438 aa).

A BIR 1 repeat occupies 44–110 (EETRLKTFTD…QRWSPNCPLL (67 aa)). Positions 194 to 213 (TATQATGDVQPETCRPSAAS) are disordered. The BIR 2 repeat unit spans residues 226–293 (ETARLRTFEA…ALWLSQCRFV (68 aa)). The Zn(2+) site is built by cysteine 263, cysteine 266, histidine 283, and cysteine 290. Residues 322-346 (GGVAVASTQASEEEQQTSLSSEEAV) are disordered. Residues 327 to 345 (ASTQASEEEQQTSLSSEEA) show a composition bias toward low complexity. The segment at 391-426 (CKICYGAEYNTAFLPCGHVVACAKCASSVTKCPLCR) adopts an RING-type zinc-finger fold.

This sequence belongs to the IAP family. In terms of assembly, interacts (via BIR 2 domain) with Dronc (via residues 114-125). Rpr, hid and grim can outcompete Dronc for binding Diap1 therefore removing Diap1-mediated ubiquitination. Interacts (via BIR 2 domain) with HtrA2; this displaces any bound Dronc. Interacts with Strica. The N-terminally cleaved form interacts with Ubr3 (via UBR-type zinc finger); the interaction promotes the recruitment and uniquitination of substrate capases such as Dronc. In terms of processing, ubiquitinated and degraded by HtrA2 in apoptotic cells; proteolytic cleavage at specific sites in the BIR domain linker region generating inactive fragments. Mutation of one site reduces but does not abolish cleavage as another site is selected by the protease.

The enzyme catalyses S-ubiquitinyl-[E2 ubiquitin-conjugating enzyme]-L-cysteine + [acceptor protein]-L-lysine = [E2 ubiquitin-conjugating enzyme]-L-cysteine + N(6)-ubiquitinyl-[acceptor protein]-L-lysine.. Its function is as follows. Anti-apoptotic protein which functions as a caspase regulator, using its E3 ubiquitin-protein ligase activity to smother caspase activity. Binds, ubiquitinates and inactivates initiator caspase Dronc, and effector caspases Drice and Dcp-1. Acts as a Nedd8-E3 ubiquitin-protein ligase for Drice. Suppresses apoptosis by targeting the apoptosome for ubiquitination and inactivation. Plays an important role in cell motility. Overexpression suppresses rpr and hid-dependent cell death in the eye. Interaction of Diap1 with Dronc is required to suppress Dronc-mediated cell death through Diap1-mediated ubiquitination of Dronc. Acts as a positive regulator of Wnt signaling. The polypeptide is Death-associated inhibitor of apoptosis 1 (Diap1) (Drosophila melanogaster (Fruit fly)).